Here is a 1048-residue protein sequence, read N- to C-terminus: Histone deacetylase complex subunit SAP130 (1048 aa).

Residues 1 to 95 are disordered; sequence MGPPRHPQAG…LQSREEKQEP (95 aa). Residues 40 to 54 are compositionally biased toward polar residues; it reads TGLSQAPSQIANSGS. The span at 67 to 80 shows a compositional bias: basic and acidic residues; the sequence is ESGRDSEVSAREHM. R232 bears the Omega-N-methylarginine mark. Phosphothreonine is present on T355. 2 positions are modified to phosphoserine: S442 and S465. 3 disordered regions span residues 458-477, 576-617, and 649-687; these read PISG…RSDN, IGTP…PEGK, and QTHS…SEIH. Composition is skewed to polar residues over residues 590 to 613 and 649 to 667; these read GIHS…QQPQ and QTHS…SSPR. K785 participates in a covalent cross-link: Glycyl lysine isopeptide (Lys-Gly) (interchain with G-Cter in SUMO2). The interval 819–871 is disordered; sequence LSMPTSDLPPGASPRKKPRKQQHVISTEEGDMMETNSTDDEKSTAKSLLVKAE. Positions 836-1047 are interactions with SIN3A and HDAC1; sequence PRKQQHVIST…KVSKLKRKEK (212 aa). S855 is subject to Phosphoserine. T856 is subject to Phosphothreonine. Glycyl lysine isopeptide (Lys-Gly) (interchain with G-Cter in SUMO2) cross-links involve residues K864 and K869. S875 is modified (phosphoserine).

Belongs to the SAP130 family. As to quaternary structure, component of a mSin3A corepressor complex that contains SIN3A, SAP130, SUDS3/SAP45, ARID4B/SAP180, HDAC1 and HDAC2. Interacts (released by dead or dying cells) with CLEC4E. In terms of processing, acetylated. Post-translationally, sumoylated with SUMO1. In terms of tissue distribution, expressed in various cancer cell ines.

Its subcellular location is the nucleus. Acts as a transcriptional repressor. May function in the assembly and/or enzymatic activity of the mSin3A corepressor complex or in mediating interactions between the complex and other regulatory complexes. The chain is Histone deacetylase complex subunit SAP130 (SAP130) from Homo sapiens (Human).